A 253-amino-acid polypeptide reads, in one-letter code: uncharacterized protein (253 aa).

10 to 35 is a binding site for NADP(+); that stretch reads ISGAASKRGIGRATAELFASHGARVA. Ser144 serves as a coordination point for substrate. Tyr159 serves as the catalytic Proton acceptor.

Belongs to the short-chain dehydrogenases/reductases (SDR) family.

This is an uncharacterized protein from Sinorhizobium fredii (strain NBRC 101917 / NGR234).